The sequence spans 254 residues: uncharacterized protein (254 aa).

The protein belongs to the MtxX family.

This is an uncharacterized protein from Methanopyrus kandleri (strain AV19 / DSM 6324 / JCM 9639 / NBRC 100938).